The chain runs to 182 residues: ATP-dependent protease subunit HslV (182 aa).

Thr-12 is a catalytic residue. Na(+) is bound by residues Gly-167, Cys-170, and Thr-173.

The protein belongs to the peptidase T1B family. HslV subfamily. As to quaternary structure, a double ring-shaped homohexamer of HslV is capped on each side by a ring-shaped HslU homohexamer. The assembly of the HslU/HslV complex is dependent on binding of ATP.

The protein resides in the cytoplasm. It carries out the reaction ATP-dependent cleavage of peptide bonds with broad specificity.. With respect to regulation, allosterically activated by HslU binding. Functionally, protease subunit of a proteasome-like degradation complex believed to be a general protein degrading machinery. The sequence is that of ATP-dependent protease subunit HslV from Acidiphilium cryptum (strain JF-5).